The chain runs to 65 residues: Large ribosomal subunit protein bL35 (65 aa).

Positions 1-15 (MPKMKTKKSASKRFT) are enriched in basic residues. The disordered stretch occupies residues 1–27 (MPKMKTKKSASKRFTARPNGSFKRGQA).

It belongs to the bacterial ribosomal protein bL35 family.

In Cupriavidus pinatubonensis (strain JMP 134 / LMG 1197) (Cupriavidus necator (strain JMP 134)), this protein is Large ribosomal subunit protein bL35.